The sequence spans 198 residues: uncharacterized protein (198 aa).

Residues methionine 1–glycine 110 form the PA14 domain.

It belongs to the flocculin family.

This is an uncharacterized protein from Saccharomyces cerevisiae (strain ATCC 204508 / S288c) (Baker's yeast).